The following is a 393-amino-acid chain: Xylose transport system permease protein XylH (393 aa).

Residues 1-24 (MSKSNPSEVKLAVPTSGGFSGLKS) lie on the Periplasmic side of the membrane. The helical transmembrane segment at 25-45 (LNLQVFVMIAAIIAIMLFFTW) threads the bilayer. The Cytoplasmic portion of the chain corresponds to 46-64 (TTDGAYLSARNVSNLLRQT). A helical membrane pass occupies residues 65–85 (AITGILAVGMVFVIISAEIDL). Residues 86–102 (SVGSMMGLLGGVAAICD) are Periplasmic-facing. A helical membrane pass occupies residues 103–123 (VWLGWPLPLTIIVTLVLGLLL). Residues 124–135 (GAWNGWWVAYRK) lie on the Cytoplasmic side of the membrane. The helical transmembrane segment at 136 to 156 (VPSFIVTLAGMLAFRGILIGI) threads the bilayer. The Periplasmic segment spans residues 157–175 (TNGTTVSPTSAAMSQIGQS). The helical transmembrane segment at 176–196 (YLPASTGFIIGALGLMAFVGW) threads the bilayer. Topologically, residues 197–214 (QWRGRMRRQALGLQSPAS) are cytoplasmic. Residues 215-235 (TAVVGRQALTAIIVLGAIWLL) form a helical membrane-spanning segment. The Periplasmic portion of the chain corresponds to 236 to 239 (NDYR). Residues 240 to 260 (GVPTPVLLLTLLLLGGMFMAT) form a helical membrane-spanning segment. Topologically, residues 261–287 (RTAFGRRIYAIGGNLEAARLSGINVER) are cytoplasmic. Residues 288 to 308 (TKLAVFAINGLMVAIAGLILS) traverse the membrane as a helical segment. The Periplasmic portion of the chain corresponds to 309–312 (SRLG). The helical transmembrane segment at 313 to 333 (AGSPSAGNIAELDAIAACVIG) threads the bilayer. Over 334–336 (GTS) the chain is Cytoplasmic. Residues 337–357 (LAGGVGSVAGAVMGAFIMASL) form a helical membrane-spanning segment. Residues 358–365 (DNGMSMMD) lie on the Periplasmic side of the membrane. Residues 366–386 (VPTFWQYIVKGAILLLAVWMD) form a helical membrane-spanning segment. Residues 387 to 393 (SATKRRS) lie on the Cytoplasmic side of the membrane.

Belongs to the binding-protein-dependent transport system permease family. AraH/RbsC subfamily.

It is found in the cell inner membrane. Part of the binding-protein-dependent transport system for D-xylose. Probably responsible for the translocation of the substrate across the membrane. This chain is Xylose transport system permease protein XylH (xylH), found in Escherichia coli O6:H1 (strain CFT073 / ATCC 700928 / UPEC).